The primary structure comprises 252 residues: Indole-3-glycerol phosphate synthase (252 aa).

The protein belongs to the TrpC family.

It carries out the reaction 1-(2-carboxyphenylamino)-1-deoxy-D-ribulose 5-phosphate + H(+) = (1S,2R)-1-C-(indol-3-yl)glycerol 3-phosphate + CO2 + H2O. Its pathway is amino-acid biosynthesis; L-tryptophan biosynthesis; L-tryptophan from chorismate: step 4/5. The chain is Indole-3-glycerol phosphate synthase from Listeria monocytogenes serotype 4a (strain HCC23).